The sequence spans 500 residues: NADH-quinone oxidoreductase subunit N (500 aa).

Helical transmembrane passes span 13-33, 42-62, 79-99, 111-131, 133-153, 168-188, 211-231, 245-265, 281-301, 321-341, 342-362, 386-406, 424-444, and 461-481; these read VMMPEFIILGVAVALSLIDLF, LLGLFAFVGIAVSFVSLLSLW, FAKSFKALLLIGSALVLLLSI, GEFYYLFLTALLGAMMMASSG, LITLFVGLELLSISSYILVAI, VITGSIATAITLFGMSYIFGF, YVLSLAFLLTFVGLSFKLASA, TTPVVSFLSVVSKTAGFVIVL, ASMLMTFAPYIAFLSGATMII, VAHAGYVLVAFASLSMFMFEA, IWFYLLAYVFMTIGAFAILQV, AIAMTIFLLSLAGIPGTAGFI, VLASIMVITTIISYVYYFGIF, and PPGVIAVVVICVIGTVLLGVF.

This sequence belongs to the complex I subunit 2 family. In terms of assembly, NDH-1 is composed of 14 different subunits. Subunits NuoA, H, J, K, L, M, N constitute the membrane sector of the complex.

It localises to the cell membrane. It catalyses the reaction a quinone + NADH + 5 H(+)(in) = a quinol + NAD(+) + 4 H(+)(out). Its function is as follows. NDH-1 shuttles electrons from NADH, via FMN and iron-sulfur (Fe-S) centers, to quinones in the respiratory chain. The immediate electron acceptor for the enzyme in this species is believed to be a menaquinone. Couples the redox reaction to proton translocation (for every two electrons transferred, four hydrogen ions are translocated across the cytoplasmic membrane), and thus conserves the redox energy in a proton gradient. The sequence is that of NADH-quinone oxidoreductase subunit N from Anoxybacillus flavithermus (strain DSM 21510 / WK1).